A 617-amino-acid polypeptide reads, in one-letter code: MKQSKMPIPTLREMPSDAQVISHALMLRAGYVRQVSAGVYSYLPLANRVIEKAKNIMRQEFEKIGAVEMLAPALLSAELWRESGRYETYGEDLYKLKNREKSDFILGPTHEETFTAIVRDSVKSYKQLPLNLYQIQPKYRDEKRPRNGLLRTREFIMKDAYSFHANYDSLDSVYDEYKAAYERIFTRSGLDFKAIIGDGGAMGGKDSQEFMAITSARTDLDRWVVLDKSVVSFDEIPVEVQEEIKAELLKWIVSGEDTIAYSSESSYAANLEMATNEYKPSNRVVAEEEVTRVATPDVKSIDEVAAFLNVPEEQTIKTLFYIADGELVAALLVGNDQLNEVKLKNHLGADFFDVASEEEVANVVQAGFGSLGPVGLPENIKIIADRKVQDVRNAVVGANEDGYHLTGVNPGRDFTAEYVDIREVREGEISPDGQGVLNFARGIEIGHIFKLGTRYSASMGADVLDENGRAVPIIMGCYGIGVSRLLSAVMEQHARLFVNKTPKGEYRYAWGINFPKELAPFDVHLITVNVKDEEAQALTEKLEASLMGAGYEVLTDDRNERVGVKFSDSDLIGLPIRITVGKKAADGIVEVKIKATGDTIEVHADNVLETLEILSKK.

Belongs to the class-II aminoacyl-tRNA synthetase family. ProS type 1 subfamily. Homodimer.

It localises to the cytoplasm. It catalyses the reaction tRNA(Pro) + L-proline + ATP = L-prolyl-tRNA(Pro) + AMP + diphosphate. Catalyzes the attachment of proline to tRNA(Pro) in a two-step reaction: proline is first activated by ATP to form Pro-AMP and then transferred to the acceptor end of tRNA(Pro). As ProRS can inadvertently accommodate and process non-cognate amino acids such as alanine and cysteine, to avoid such errors it has two additional distinct editing activities against alanine. One activity is designated as 'pretransfer' editing and involves the tRNA(Pro)-independent hydrolysis of activated Ala-AMP. The other activity is designated 'posttransfer' editing and involves deacylation of mischarged Ala-tRNA(Pro). The misacylated Cys-tRNA(Pro) is not edited by ProRS. This chain is Proline--tRNA ligase, found in Streptococcus pneumoniae (strain ATCC BAA-255 / R6).